Consider the following 203-residue polypeptide: Flagellar transcriptional regulator FlhC (203 aa).

Zn(2+) contacts are provided by Cys-161, Cys-164, Cys-181, and Cys-184.

It belongs to the FlhC family. As to quaternary structure, heterohexamer composed of two FlhC and four FlhD subunits. Each FlhC binds a FlhD dimer, forming a heterotrimer, and a hexamer assembles by dimerization of two heterotrimers. It depends on Zn(2+) as a cofactor.

The protein resides in the cytoplasm. Its function is as follows. Functions in complex with FlhD as a master transcriptional regulator that regulates transcription of several flagellar and non-flagellar operons by binding to their promoter region. Activates expression of class 2 flagellar genes, including fliA, which is a flagellum-specific sigma factor that turns on the class 3 genes. Also regulates genes whose products function in a variety of physiological pathways. The protein is Flagellar transcriptional regulator FlhC of Cupriavidus necator (strain ATCC 17699 / DSM 428 / KCTC 22496 / NCIMB 10442 / H16 / Stanier 337) (Ralstonia eutropha).